The chain runs to 143 residues: Large ribosomal subunit protein uL11 (143 aa).

The protein belongs to the universal ribosomal protein uL11 family. As to quaternary structure, part of the ribosomal stalk of the 50S ribosomal subunit. Interacts with L10 and the large rRNA to form the base of the stalk. L10 forms an elongated spine to which L12 dimers bind in a sequential fashion forming a multimeric L10(L12)X complex. One or more lysine residues are methylated.

Its function is as follows. Forms part of the ribosomal stalk which helps the ribosome interact with GTP-bound translation factors. The protein is Large ribosomal subunit protein uL11 of Sphingopyxis alaskensis (strain DSM 13593 / LMG 18877 / RB2256) (Sphingomonas alaskensis).